The following is a 294-amino-acid chain: Lipoyl synthase (294 aa).

Positions 35, 40, 46, 61, 65, 68, and 275 each coordinate [4Fe-4S] cluster. The Radical SAM core domain occupies Cys46–Arg264.

It belongs to the radical SAM superfamily. Lipoyl synthase family. It depends on [4Fe-4S] cluster as a cofactor.

It is found in the cytoplasm. It carries out the reaction [[Fe-S] cluster scaffold protein carrying a second [4Fe-4S](2+) cluster] + N(6)-octanoyl-L-lysyl-[protein] + 2 oxidized [2Fe-2S]-[ferredoxin] + 2 S-adenosyl-L-methionine + 4 H(+) = [[Fe-S] cluster scaffold protein] + N(6)-[(R)-dihydrolipoyl]-L-lysyl-[protein] + 4 Fe(3+) + 2 hydrogen sulfide + 2 5'-deoxyadenosine + 2 L-methionine + 2 reduced [2Fe-2S]-[ferredoxin]. It participates in protein modification; protein lipoylation via endogenous pathway; protein N(6)-(lipoyl)lysine from octanoyl-[acyl-carrier-protein]: step 2/2. Catalyzes the radical-mediated insertion of two sulfur atoms into the C-6 and C-8 positions of the octanoyl moiety bound to the lipoyl domains of lipoate-dependent enzymes, thereby converting the octanoylated domains into lipoylated derivatives. This Anaeromyxobacter sp. (strain Fw109-5) protein is Lipoyl synthase.